The primary structure comprises 295 residues: Acetylglutamate kinase (295 aa).

Substrate contacts are provided by residues 66-67, arginine 88, and asparagine 193; that span reads GG.

It belongs to the acetylglutamate kinase family. ArgB subfamily.

It localises to the cytoplasm. It catalyses the reaction N-acetyl-L-glutamate + ATP = N-acetyl-L-glutamyl 5-phosphate + ADP. It functions in the pathway amino-acid biosynthesis; L-arginine biosynthesis; N(2)-acetyl-L-ornithine from L-glutamate: step 2/4. Its function is as follows. Catalyzes the ATP-dependent phosphorylation of N-acetyl-L-glutamate. The protein is Acetylglutamate kinase of Rhizobium etli (strain CIAT 652).